A 209-amino-acid polypeptide reads, in one-letter code: Thiamine-phosphate synthase 1 (209 aa).

4-amino-2-methyl-5-(diphosphooxymethyl)pyrimidine is bound by residues 39-43 (QFREK) and Asn-74. Residues Asp-75 and Asp-94 each coordinate Mg(2+). Ser-112 lines the 4-amino-2-methyl-5-(diphosphooxymethyl)pyrimidine pocket. A 2-[(2R,5Z)-2-carboxy-4-methylthiazol-5(2H)-ylidene]ethyl phosphate-binding site is contributed by 138 to 140 (TQS). Lys-141 is a 4-amino-2-methyl-5-(diphosphooxymethyl)pyrimidine binding site. 2-[(2R,5Z)-2-carboxy-4-methylthiazol-5(2H)-ylidene]ethyl phosphate is bound by residues Gly-170 and 190–191 (IS).

It belongs to the thiamine-phosphate synthase family. It depends on Mg(2+) as a cofactor.

It catalyses the reaction 2-[(2R,5Z)-2-carboxy-4-methylthiazol-5(2H)-ylidene]ethyl phosphate + 4-amino-2-methyl-5-(diphosphooxymethyl)pyrimidine + 2 H(+) = thiamine phosphate + CO2 + diphosphate. The enzyme catalyses 2-(2-carboxy-4-methylthiazol-5-yl)ethyl phosphate + 4-amino-2-methyl-5-(diphosphooxymethyl)pyrimidine + 2 H(+) = thiamine phosphate + CO2 + diphosphate. It carries out the reaction 4-methyl-5-(2-phosphooxyethyl)-thiazole + 4-amino-2-methyl-5-(diphosphooxymethyl)pyrimidine + H(+) = thiamine phosphate + diphosphate. It functions in the pathway cofactor biosynthesis; thiamine diphosphate biosynthesis; thiamine phosphate from 4-amino-2-methyl-5-diphosphomethylpyrimidine and 4-methyl-5-(2-phosphoethyl)-thiazole: step 1/1. Its function is as follows. Condenses 4-methyl-5-(beta-hydroxyethyl)thiazole monophosphate (THZ-P) and 2-methyl-4-amino-5-hydroxymethyl pyrimidine pyrophosphate (HMP-PP) to form thiamine monophosphate (TMP). This chain is Thiamine-phosphate synthase 1, found in Streptococcus pneumoniae (strain ATCC BAA-255 / R6).